An 856-amino-acid polypeptide reads, in one-letter code: DNA mismatch repair protein MutS (856 aa).

605-612 lines the ATP pocket; sequence GPNMSGKS.

The protein belongs to the DNA mismatch repair MutS family.

In terms of biological role, this protein is involved in the repair of mismatches in DNA. It is possible that it carries out the mismatch recognition step. This protein has a weak ATPase activity. The chain is DNA mismatch repair protein MutS from Lysinibacillus sphaericus (strain C3-41).